A 256-amino-acid chain; its full sequence is DNA repair protein RecO (256 aa).

The protein belongs to the RecO family.

In terms of biological role, involved in DNA repair and RecF pathway recombination. This is DNA repair protein RecO from Desulforamulus reducens (strain ATCC BAA-1160 / DSM 100696 / MI-1) (Desulfotomaculum reducens).